A 208-amino-acid polypeptide reads, in one-letter code: Photosystem I reaction center subunit II-1, chloroplastic (208 aa).

A chloroplast-targeting transit peptide spans 1–45 (MATQAAGIFNSAITTAATSGVKKLHFFSTTHRPKSLSFTKTAIRA). Threonine 48 is subject to Phosphothreonine. A disordered region spans residues 49–72 (DSSAAAAAAPATKEAPVGFTPPQL). Positions 50 to 64 (SSAAAAAAPATKEAP) are enriched in low complexity. Residues 141-149 (RLRSKYKIT) are ferredoxin and ferredoxin-oxidoreductase binding.

Belongs to the PsaD family. Interacts with PGRL1A and PGRL1B. Phosphorylated by a threonine specific thylakoid kinase in a light activated and redox-dependent manner.

The protein resides in the plastid. The protein localises to the chloroplast thylakoid membrane. In terms of biological role, psaD can form complexes with ferredoxin and ferredoxin-oxidoreductase in photosystem I (PS I) reaction center. PSAD may encode the ferredoxin-docking protein. The chain is Photosystem I reaction center subunit II-1, chloroplastic (psaD1) from Arabidopsis thaliana (Mouse-ear cress).